A 194-amino-acid chain; its full sequence is Probable GTP-binding protein EngB (194 aa).

Residues 22-194 enclose the EngB-type G domain; it reads KIPQIAIVGK…LRIFEEVIEK (173 aa). Residues 30 to 37, 57 to 61, 75 to 78, 142 to 145, and 173 to 175 contribute to the GTP site; these read GKSNVGKS, GKTRG, DLPG, TKAD, and FSA. 2 residues coordinate Mg(2+): Ser-37 and Thr-59.

The protein belongs to the TRAFAC class TrmE-Era-EngA-EngB-Septin-like GTPase superfamily. EngB GTPase family. It depends on Mg(2+) as a cofactor.

Functionally, necessary for normal cell division and for the maintenance of normal septation. The chain is Probable GTP-binding protein EngB from Caldanaerobacter subterraneus subsp. tengcongensis (strain DSM 15242 / JCM 11007 / NBRC 100824 / MB4) (Thermoanaerobacter tengcongensis).